Here is a 174-residue protein sequence, read N- to C-terminus: Large ribosomal subunit protein uL10 (174 aa).

This sequence belongs to the universal ribosomal protein uL10 family. As to quaternary structure, part of the ribosomal stalk of the 50S ribosomal subunit. The N-terminus interacts with L11 and the large rRNA to form the base of the stalk. The C-terminus forms an elongated spine to which L12 dimers bind in a sequential fashion forming a multimeric L10(L12)X complex.

Its function is as follows. Forms part of the ribosomal stalk, playing a central role in the interaction of the ribosome with GTP-bound translation factors. In Pelobacter propionicus (strain DSM 2379 / NBRC 103807 / OttBd1), this protein is Large ribosomal subunit protein uL10.